The chain runs to 104 residues: MAAMIPGELLPEPGELELNAGRPVTTVLVANTGDRPVQVGSHFHFAEANAALRFDREAARGQRLDIAAGTAIRFEPGDERQVQLVPFSGARRVVGFNAQINGDL.

Belongs to the urease beta subunit family. As to quaternary structure, heterotrimer of UreA (gamma), UreB (beta) and UreC (alpha) subunits. Three heterotrimers associate to form the active enzyme.

The protein localises to the cytoplasm. The enzyme catalyses urea + 2 H2O + H(+) = hydrogencarbonate + 2 NH4(+). It participates in nitrogen metabolism; urea degradation; CO(2) and NH(3) from urea (urease route): step 1/1. In Synechococcus sp. (strain RCC307), this protein is Urease subunit beta.